The primary structure comprises 831 residues: Phenylalanine--tRNA ligase beta subunit (831 aa).

In terms of domain architecture, tRNA-binding spans 44-155 (GPVDGPVTVG…GAAEPGADGA (112 aa)). One can recognise a B5 domain in the interval 414–489 (WSPPPIRMGV…RLEGLEVIPS (76 aa)). 4 residues coordinate Mg(2+): Asp-467, Asp-473, Glu-476, and Glu-477. Residues 737 to 830 (SPYPAVFQDV…AAERVGAVLR (94 aa)) form the FDX-ACB domain.

Belongs to the phenylalanyl-tRNA synthetase beta subunit family. Type 1 subfamily. In terms of assembly, tetramer of two alpha and two beta subunits. It depends on Mg(2+) as a cofactor.

It is found in the cytoplasm. It carries out the reaction tRNA(Phe) + L-phenylalanine + ATP = L-phenylalanyl-tRNA(Phe) + AMP + diphosphate + H(+). In Mycobacterium tuberculosis (strain ATCC 25618 / H37Rv), this protein is Phenylalanine--tRNA ligase beta subunit (pheT).